A 533-amino-acid chain; its full sequence is Calcium/calmodulin-dependent protein kinase type II subunit delta (533 aa).

A2 carries the N-acetylalanine modification. A Protein kinase domain is found at 14 to 272 (YQLFEELGKG…ASEALKHPWI (259 aa)). ATP is bound by residues 20–28 (LGKGAFSVV) and K43. The Proton acceptor role is filled by D136. The interval 283–292 (HRQETVDCLK) is autoinhibitory domain. T287 carries the phosphothreonine; by autocatalysis modification. The interval 291–301 (LKKFNARRKLK) is calmodulin-binding. Residues T306 and T307 each carry the phosphothreonine; by autocatalysis modification. The residue at position 315 (S315) is a Phosphoserine. At K318 the chain carries N6-acetyllysine. 2 positions are modified to phosphoserine: S319 and S364. A disordered region spans residues 337 to 375 (TSPKENIPTPALEPQTTVIHNPDGNKESTESSNTTIEDE). T365 carries the post-translational modification Phosphothreonine. S367 carries the phosphoserine modification. T370 and T371 each carry phosphothreonine. 3 positions are modified to phosphoserine: S438, S524, and S528.

Belongs to the protein kinase superfamily. CAMK Ser/Thr protein kinase family. CaMK subfamily. In terms of assembly, CAMK2 is composed of 4 different chains: alpha (CAMK2A), beta (CAMK2B), gamma (CAMK2G), and delta (CAMK2D). The different isoforms assemble into homo- or heteromultimeric holoenzymes composed of 12 subunits with two hexameric rings stacked one on top of the other. Interacts with RRAD and CACNB2. Post-translationally, autophosphorylation of Thr-287 following activation by Ca(2+)/calmodulin. Phosphorylation of Thr-287 locks the kinase into an activated state. In terms of tissue distribution, expressed in liver.

Its subcellular location is the cell membrane. It is found in the sarcolemma. It localises to the sarcoplasmic reticulum membrane. It carries out the reaction L-seryl-[protein] + ATP = O-phospho-L-seryl-[protein] + ADP + H(+). The catalysed reaction is L-threonyl-[protein] + ATP = O-phospho-L-threonyl-[protein] + ADP + H(+). Its activity is regulated as follows. Activated by Ca(2+)/calmodulin. Binding of calmodulin results in conformational change that relieves intrasteric autoinhibition and allows autophosphorylation of Thr-287 which turns the kinase in a constitutively active form and confers to the kinase a Ca(2+)-independent activity. Calcium/calmodulin-dependent protein kinase involved in the regulation of Ca(2+) homeostatis and excitation-contraction coupling (ECC) in heart by targeting ion channels, transporters and accessory proteins involved in Ca(2+) influx into the myocyte, Ca(2+) release from the sarcoplasmic reticulum (SR), SR Ca(2+) uptake and Na(+) and K(+) channel transport. Targets also transcription factors and signaling molecules to regulate heart function. In its activated form, is involved in the pathogenesis of dilated cardiomyopathy and heart failure. Contributes to cardiac decompensation and heart failure by regulating SR Ca(2+) release via direct phosphorylation of RYR2 Ca(2+) channel on 'Ser-2808'. In the nucleus, phosphorylates the MEF2 repressor HDAC4, promoting its nuclear export and binding to 14-3-3 protein, and expression of MEF2 and genes involved in the hypertrophic program. Is essential for left ventricular remodeling responses to myocardial infarction. In pathological myocardial remodeling acts downstream of the beta adrenergic receptor signaling cascade to regulate key proteins involved in ECC. Regulates Ca(2+) influx to myocytes by binding and phosphorylating the L-type Ca(2+) channel subunit beta-2 CACNB2. In addition to Ca(2+) channels, can target and regulate the cardiac sarcolemmal Na(+) channel Nav1.5/SCN5A and the K+ channel Kv4.3/KCND3, which contribute to arrhythmogenesis in heart failure. Phosphorylates phospholamban (PLN/PLB), an endogenous inhibitor of SERCA2A/ATP2A2, contributing to the enhancement of SR Ca(2+) uptake that may be important in frequency-dependent acceleration of relaxation (FDAR) and maintenance of contractile function during acidosis. May participate in the modulation of skeletal muscle function in response to exercise, by regulating SR Ca(2+) transport through phosphorylation of PLN/PLB and triadin, a ryanodine receptor-coupling factor. In response to interferon-gamma (IFN-gamma) stimulation, catalyzes phosphorylation of STAT1, stimulating the JAK-STAT signaling pathway. The protein is Calcium/calmodulin-dependent protein kinase type II subunit delta (CAMK2D) of Oryctolagus cuniculus (Rabbit).